Reading from the N-terminus, the 305-residue chain is Large ribosomal subunit protein uL3c (305 aa).

The N-terminal 84 residues, 1–84, are a transit peptide targeting the chloroplast; sequence MAAILPTFSI…AVGGLEIKMM (84 aa). A disordered region spans residues 228-256; the sequence is SHRALGSIGAGTTPGHVYKGKKMPGRMGG.

As to quaternary structure, component of the chloroplast large ribosomal subunit (LSU). Mature 70S chloroplast ribosomes of higher plants consist of a small (30S) and a large (50S) subunit. The 30S small subunit contains 1 molecule of ribosomal RNA (16S rRNA) and 24 different proteins. The 50S large subunit contains 3 rRNA molecules (23S, 5S and 4.5S rRNA) and 33 different proteins.

It is found in the plastid. Its subcellular location is the chloroplast. Its function is as follows. Component of the chloroplast ribosome (chloro-ribosome), a dedicated translation machinery responsible for the synthesis of chloroplast genome-encoded proteins, including proteins of the transcription and translation machinery and components of the photosynthetic apparatus. This chain is Large ribosomal subunit protein uL3c (RPL3), found in Spinacia oleracea (Spinach).